The sequence spans 502 residues: ATP synthase subunit alpha, chloroplastic (502 aa).

170-177 (GDRQTGKT) is a binding site for ATP.

It belongs to the ATPase alpha/beta chains family. In terms of assembly, F-type ATPases have 2 components, CF(1) - the catalytic core - and CF(0) - the membrane proton channel. CF(1) has five subunits: alpha(3), beta(3), gamma(1), delta(1), epsilon(1). CF(0) has four main subunits: a, b, b' and c.

The protein localises to the plastid. The protein resides in the chloroplast thylakoid membrane. It carries out the reaction ATP + H2O + 4 H(+)(in) = ADP + phosphate + 5 H(+)(out). Its function is as follows. Produces ATP from ADP in the presence of a proton gradient across the membrane. The alpha chain is a regulatory subunit. This is ATP synthase subunit alpha, chloroplastic from Tupiella akineta (Green alga).